The sequence spans 396 residues: Serpin-ZXA (396 aa).

Residues 343–367 (GTEAAAATAAVITLRSAPIAEDFVA) are RCL.

It belongs to the serpin family.

Functionally, probable serine protease inhibitor. This is Serpin-ZXA from Oryza sativa subsp. japonica (Rice).